Here is an 859-residue protein sequence, read N- to C-terminus: MYMSTDEIRRAFLAFFESKGHQIVESSSLVPANDPTLLFTNAGMNQFKDCFLGSEKRNYTRATTAQRCVRAGGKHNDLENVGFTARHHTFFEMLGNFSFGDYFKQDAIKYAWEFLTERLELPADRLLVTVYETDDEAFEIWNKEMGIPADRIVRIGDNKGAPYASDNFWQMGDTGPCGPCTEIFYDHGEHIWGGRPGTPEEDGDRFIEIWNNVFMQFNRHADGTMEPLPKPSVDTGMGIERIAAIMQGVHSNYEIDIFQTLIKEAAKVIGYDDLSNQSLRVVADHIRSCSYLIVDGVMPSNEGRGYVLRRIIRRAVRHGNKLGAKGSYFYKLVGPLAEIMGTAGEELKKQQALVEKVLKIEEENFGRTLERGMAILNEALDNLEGTVLDGETVFKLYDTYGFPADLTNDVARERELTIDEDGFEKAMEEQRQRAREAGQFGTDYNAVIKVESETVFHGYDSTEAKASVVALFREGEEVDALSAGDDAILILDQTPFYAESGGQCGDAGIITVETGKFVVTDTHKIGNAIGHHGKLVEGVLSKADHAMAQVDETRRAAIILNHSATHLLHAALRQVLGEHVTQKGSLVKAENLRFDFSHLEAVKAEELRQVERIVNQQIRLNHTIETDLMDIDAAKEKGAMALFGEKYDDEVRVLSMGEFSTELCGGIHASSTGDIGLFKITSEGGIAAGIRRIEAVTGEAALDAIEAQQKAADKKLNEAASKAKQLEKEIQQLKDKLASQESASLINKVQEIAGTKVLVAQLDGAENKALRGMVDELKNQIGSGIIMLGNVSEGKVGLIAGVTKDLIGQVKAGELVNMVAQQVGGKGGGRPDMAQAGGTDAEALPNALASVEAWLTERL.

Histidine 562, histidine 566, cysteine 664, and histidine 668 together coordinate Zn(2+).

Belongs to the class-II aminoacyl-tRNA synthetase family. It depends on Zn(2+) as a cofactor.

It localises to the cytoplasm. The enzyme catalyses tRNA(Ala) + L-alanine + ATP = L-alanyl-tRNA(Ala) + AMP + diphosphate. In terms of biological role, catalyzes the attachment of alanine to tRNA(Ala) in a two-step reaction: alanine is first activated by ATP to form Ala-AMP and then transferred to the acceptor end of tRNA(Ala). Also edits incorrectly charged Ser-tRNA(Ala) and Gly-tRNA(Ala) via its editing domain. This Aliivibrio fischeri (strain ATCC 700601 / ES114) (Vibrio fischeri) protein is Alanine--tRNA ligase.